The primary structure comprises 740 residues: Phosphoribosylformylglycinamidine synthase subunit PurL (740 aa).

His54 is a catalytic residue. ATP contacts are provided by Tyr57 and Lys96. Mg(2+) is bound at residue Glu98. Residues 99–102 and Arg121 contribute to the substrate site; that span reads SHNH. His100 (proton acceptor) is an active-site residue. Asp122 lines the Mg(2+) pocket. Gln245 is a binding site for substrate. Position 273 (Asp273) interacts with Mg(2+). 317–319 provides a ligand contact to substrate; sequence ESQ. Residues Asp499 and Gly536 each contribute to the ATP site. Residue Asn537 participates in Mg(2+) binding. Residue Ser539 coordinates substrate.

The protein belongs to the FGAMS family. As to quaternary structure, monomer. Part of the FGAM synthase complex composed of 1 PurL, 1 PurQ and 2 PurS subunits.

Its subcellular location is the cytoplasm. The catalysed reaction is N(2)-formyl-N(1)-(5-phospho-beta-D-ribosyl)glycinamide + L-glutamine + ATP + H2O = 2-formamido-N(1)-(5-O-phospho-beta-D-ribosyl)acetamidine + L-glutamate + ADP + phosphate + H(+). Its pathway is purine metabolism; IMP biosynthesis via de novo pathway; 5-amino-1-(5-phospho-D-ribosyl)imidazole from N(2)-formyl-N(1)-(5-phospho-D-ribosyl)glycinamide: step 1/2. Its function is as follows. Part of the phosphoribosylformylglycinamidine synthase complex involved in the purines biosynthetic pathway. Catalyzes the ATP-dependent conversion of formylglycinamide ribonucleotide (FGAR) and glutamine to yield formylglycinamidine ribonucleotide (FGAM) and glutamate. The FGAM synthase complex is composed of three subunits. PurQ produces an ammonia molecule by converting glutamine to glutamate. PurL transfers the ammonia molecule to FGAR to form FGAM in an ATP-dependent manner. PurS interacts with PurQ and PurL and is thought to assist in the transfer of the ammonia molecule from PurQ to PurL. In Anoxybacillus flavithermus (strain DSM 21510 / WK1), this protein is Phosphoribosylformylglycinamidine synthase subunit PurL.